Here is a 509-residue protein sequence, read N- to C-terminus: Glycogen synthase (509 aa).

K47 provides a ligand contact to ADP-alpha-D-glucose.

It belongs to the glycosyltransferase 1 family. Bacterial/plant glycogen synthase subfamily.

The enzyme catalyses [(1-&gt;4)-alpha-D-glucosyl](n) + ADP-alpha-D-glucose = [(1-&gt;4)-alpha-D-glucosyl](n+1) + ADP + H(+). Its pathway is glycan biosynthesis; glycogen biosynthesis. Synthesizes alpha-1,4-glucan chains using ADP-glucose. This Xanthomonas oryzae pv. oryzae (strain PXO99A) protein is Glycogen synthase.